A 485-amino-acid polypeptide reads, in one-letter code: Peroxisomal catalase (485 aa).

Residues His53 and Asn126 contribute to the active site. A heme-binding site is contributed by Tyr336.

Belongs to the catalase family. Homotetramer. Requires heme as cofactor.

Its subcellular location is the peroxisome matrix. It carries out the reaction 2 H2O2 = O2 + 2 H2O. Functionally, catalyzes the degradation of hydrogen peroxide (H(2)O(2)) generated by peroxisomal oxidases to water and oxygen, thereby protecting cells from the toxic effects of hydrogen peroxide. The chain is Peroxisomal catalase (CAT1) from Candida albicans (strain SC5314 / ATCC MYA-2876) (Yeast).